The primary structure comprises 543 residues: Chaperonin GroEL 1 (543 aa).

ATP contacts are provided by residues 29 to 32, Lys50, 86 to 90, Gly414, and Asp493; these read TLGP and DGTTT. A disordered region spans residues 524 to 543; sequence KEDKGAPAGMGGMPPGGGMY. Positions 531–543 are enriched in gly residues; the sequence is AGMGGMPPGGGMY.

This sequence belongs to the chaperonin (HSP60) family. As to quaternary structure, forms a cylinder of 14 subunits composed of two heptameric rings stacked back-to-back. Interacts with the co-chaperonin GroES.

The protein localises to the cytoplasm. The enzyme catalyses ATP + H2O + a folded polypeptide = ADP + phosphate + an unfolded polypeptide.. Together with its co-chaperonin GroES, plays an essential role in assisting protein folding. The GroEL-GroES system forms a nano-cage that allows encapsulation of the non-native substrate proteins and provides a physical environment optimized to promote and accelerate protein folding. This is Chaperonin GroEL 1 from Syntrophobacter fumaroxidans (strain DSM 10017 / MPOB).